Reading from the N-terminus, the 98-residue chain is Large ribosomal subunit protein eL21 (98 aa).

A compositionally biased stretch (basic residues) spans 1–17 (MQRSRGFRSKSRRKMTK). Residues 1-28 (MQRSRGFRSKSRRKMTKVVREGRSNPIT) form a disordered region.

Belongs to the eukaryotic ribosomal protein eL21 family.

This is Large ribosomal subunit protein eL21 from Methanobrevibacter smithii (strain ATCC 35061 / DSM 861 / OCM 144 / PS).